A 393-amino-acid chain; its full sequence is MLNSLDLEGPPSSTRVVVAMSGGVDSSTTAALLKAEGYDVIGITLQLYDHGEATHRKGACCAGQDIHDARDVAERIGIPHYVLDYESRFRESVIDRFAESYALGETPVPCIECNRSVKFRDLLTTAQELGAQALATGHYVASRRQPDGSRAMVCAADADRDQSYFLFATTQDQLNHLRFPLGDMTKAQTRELARRFDLPVAEKHDSQDICFVPTGRYTDVIERMRPNAMLPGDIVDLRGRVLGHHQGIANFTVGQRRGIGIAASMPLYVVALDAASRQVIVGPRAALRKNLITLRDINWIGDGTFDDVAREGRDLYIKVRSTRPPQPAHLRMNGDHCEVELFAGEEGVSPGQACVFYDAPTGQARVLGGGFITHASNNSDRAGTHHLALRAAI.

Residues 19–26 (AMSGGVDS) and L45 each bind ATP. C113 acts as the Nucleophile in catalysis. Residues C113 and C210 are joined by a disulfide bond. G137 contacts ATP. An interaction with tRNA region spans residues 160 to 162 (RDQ). C210 serves as the catalytic Cysteine persulfide intermediate.

It belongs to the MnmA/TRMU family.

It is found in the cytoplasm. It catalyses the reaction S-sulfanyl-L-cysteinyl-[protein] + uridine(34) in tRNA + AH2 + ATP = 2-thiouridine(34) in tRNA + L-cysteinyl-[protein] + A + AMP + diphosphate + H(+). Its function is as follows. Catalyzes the 2-thiolation of uridine at the wobble position (U34) of tRNA, leading to the formation of s(2)U34. In Afipia carboxidovorans (strain ATCC 49405 / DSM 1227 / KCTC 32145 / OM5) (Oligotropha carboxidovorans), this protein is tRNA-specific 2-thiouridylase MnmA.